We begin with the raw amino-acid sequence, 641 residues long: Fibrinogen alpha-2 chain (641 aa).

Residues 1–23 (MTLRGVSMVLTWCLLVSKAWSSG) form the signal peptide. Residues 107-226 (SVSDVSNQVV…IVHESFSVER (120 aa)) adopt a coiled-coil conformation. The interval 228 to 327 (DARSLHPYSG…QKTEELSFKK (100 aa)) is disordered. The N-linked (GlcNAc...) asparagine glycan is linked to N271. Residues 279–289 (VDERSKVEKDV) are compositionally biased toward basic and acidic residues. A compositionally biased stretch (low complexity) spans 293 to 317 (STSSVSSSSSSSSSSSSTSSTISST). A Fibrinogen C-terminal domain is found at 395-636 (RTNLSEYIDC…RTAVRFRRVQ (242 aa)). N-linked (GlcNAc...) asparagine glycosylation occurs at N397. Cysteines 404 and 435 form a disulfide. N-linked (GlcNAc...) asparagine glycosylation is present at N458. C571 and C584 form a disulfide bridge.

Heterohexamer; disulfide linked. Contains 2 sets of 3 non-identical chains (alpha, beta and gamma). The 2 heterotrimers are in head to head conformation with the N-termini in a small central domain. In terms of processing, conversion of fibrinogen to fibrin is triggered by thrombin, which cleaves fibrinopeptides A and B from alpha and beta chains, and thus exposes the N-terminal polymerization sites responsible for the formation of the soft clot. The soft clot is converted into the hard clot by factor XIIIA which catalyzes the epsilon-(gamma-glutamyl)lysine cross-linking between gamma chains (stronger) and between alpha chains (weaker) of different monomers. Forms F13A-mediated cross-links between a glutamine and the epsilon-amino group of a lysine residue, forming fibronectin-fibrinogen heteropolymers.

It is found in the secreted. In terms of biological role, fibrinogen has a double function: yielding monomers that polymerize into fibrin and acting as a cofactor in platelet aggregation. This is Fibrinogen alpha-2 chain from Petromyzon marinus (Sea lamprey).